A 742-amino-acid polypeptide reads, in one-letter code: 5-methyltetrahydropteroyltriglutamate--homocysteine methyltransferase (742 aa).

Residues 18-21 (REWK) and Lys112 each bind 5-methyltetrahydropteroyltri-L-glutamate. L-homocysteine is bound by residues 420–422 (IGS) and Glu473. L-methionine-binding positions include 420 to 422 (IGS) and Glu473. Trp550 contacts 5-methyltetrahydropteroyltri-L-glutamate. Residue Asp588 coordinates L-homocysteine. Residue Asp588 coordinates L-methionine. Glu594 contacts 5-methyltetrahydropteroyltri-L-glutamate. Zn(2+) is bound by residues His630, Cys632, and Glu654. The active-site Proton donor is the His683. Cys715 provides a ligand contact to Zn(2+).

Belongs to the vitamin-B12 independent methionine synthase family. It depends on Zn(2+) as a cofactor.

The catalysed reaction is 5-methyltetrahydropteroyltri-L-glutamate + L-homocysteine = tetrahydropteroyltri-L-glutamate + L-methionine. It participates in amino-acid biosynthesis; L-methionine biosynthesis via de novo pathway; L-methionine from L-homocysteine (MetE route): step 1/1. Functionally, catalyzes the transfer of a methyl group from 5-methyltetrahydrofolate to homocysteine resulting in methionine formation. The chain is 5-methyltetrahydropteroyltriglutamate--homocysteine methyltransferase from Staphylococcus aureus (strain USA300).